The sequence spans 269 residues: MASEFKKKLFWRAVVAEFLATTLFVFISIGSALGFKYPVGNNQTAVQDNVKVSLAFGLSIATLAQSVGHISGAHLNPAVTLGLLLSCQISIFRALMYIIAQCVGAIVATAILSGITSSLTGNSLGRNDLADGVNSGQGLGIEIIGTLQLVLCVLATTDRRRRDLGGSAPLAIGLSVALGHLLAIDYTGCGINPARSFGSAVITHNFSNHWIFWVGPFIGGALAVLIYDFILAPRSSDLTDRVKVWTSGQVEEYDLDADDINSRVEMKPK.

At 2–11 the chain is on the cytoplasmic side; the sequence is ASEFKKKLFW. Residues 12–29 traverse the membrane as a helical segment; it reads RAVVAEFLATTLFVFISI. Over 30–46 the chain is Extracellular; that stretch reads GSALGFKYPVGNNQTAV. N-linked (GlcNAc...) asparagine glycosylation occurs at N42. The helical transmembrane segment at 47-65 threads the bilayer; it reads QDNVKVSLAFGLSIATLAQ. The Cytoplasmic portion of the chain corresponds to 66-68; the sequence is SVG. The stretch at 69–82 is an intramembrane region; the sequence is HISGAHLNPAVTLG. The NPA 1 motif lies at 76 to 78; that stretch reads NPA. Residues 83–90 lie on the Cytoplasmic side of the membrane; sequence LLLSCQIS. A helical transmembrane segment spans residues 91 to 109; it reads IFRALMYIIAQCVGAIVAT. The Extracellular portion of the chain corresponds to 110–133; that stretch reads AILSGITSSLTGNSLGRNDLADGV. The helical transmembrane segment at 134–153 threads the bilayer; it reads NSGQGLGIEIIGTLQLVLCV. Topologically, residues 154–163 are cytoplasmic; sequence LATTDRRRRD. Residues 164-181 form a helical membrane-spanning segment; the sequence is LGGSAPLAIGLSVALGHL. Over 182–186 the chain is Extracellular; sequence LAIDY. An intramembrane segment occupies 187–199; that stretch reads TGCGINPARSFGS. Positions 192 to 194 match the NPA 2 motif; sequence NPA. Topologically, residues 200–206 are extracellular; that stretch reads AVITHNF. N-linked (GlcNAc...) asparagine glycosylation is present at N205. The helical transmembrane segment at 207–224 threads the bilayer; sequence SNHWIFWVGPFIGGALAV. Over 225 to 269 the chain is Cytoplasmic; sequence LIYDFILAPRSSDLTDRVKVWTSGQVEEYDLDADDINSRVEMKPK. The residue at position 247 (S247) is a Phosphoserine. Y253 is modified (phosphotyrosine). Phosphoserine is present on S262.

This sequence belongs to the MIP/aquaporin (TC 1.A.8) family. Homotetramer; each monomer provides an independent water pore. Component of the ankyrin-1 complex in the erythrocyte, composed of ANK1, RHCE, RHAG, SLC4A1, EPB42, GYPA, GYPB and AQP1. Interacts with EPHB2; involved in endolymph production in the inner ear. Identified in a complex with STOM. Interacts (via the N-terminal) with ANK1 (via ANK 1-5 repeats). Interacts (via the C-terminal) with EPB42. As to expression, detected in erythrocytes (at protein level). Expressed in a number of tissues including erythrocytes, renal tubules, retinal pigment epithelium, heart, lung, skeletal muscle, kidney and pancreas. Weakly expressed in brain, placenta and liver.

The protein localises to the cell membrane. It catalyses the reaction H2O(in) = H2O(out). It carries out the reaction nitric oxide(out) = nitric oxide(in). The enzyme catalyses CO2(out) = CO2(in). The catalysed reaction is glycerol(in) = glycerol(out). It catalyses the reaction H2O2(out) = H2O2(in). It carries out the reaction K(+)(in) = K(+)(out). The enzyme catalyses Na(+)(in) = Na(+)(out). With respect to regulation, the water channel activity is inhibited by P-choloromercuribenzene sulphonate and diethylpyrocarbonate(DPPC). The glycerol channel activity is inhibited by P-choloromercuribenzene sulphonate, diethylpyrocarbonate(DPPC), phloretin and Cu(2+). Inhibited by mercury. In terms of biological role, forms a water channel that facilitates the transport of water across cell membranes, playing a crucial role in water homeostasis in various tissues. Could also be permeable to small solutes including hydrogen peroxide, glycerol and gases such as amonnia (NH3), nitric oxide (NO) and carbon dioxide (CO2). Recruited to the ankyrin-1 complex, a multiprotein complex of the erythrocyte membrane, it could be part of a CO2 metabolon, linking facilitated diffusion of CO2 across the membrane, anion exchange of Cl(-)/HCO3(-) and interconversion of dissolved CO2 and carbonic acid in the cytosol. In vitro, it shows non-selective gated cation channel activity and may be permeable to cations like K(+) and Na(+) in vivo. The protein is Aquaporin-1 of Homo sapiens (Human).